The sequence spans 395 residues: Ribonuclease D (395 aa).

A 3'-5' exonuclease domain is found at 14–181 (LITKSEDLAA…VYETLRDRLE (168 aa)). The HRDC domain occupies 219 to 300 (NRRYLGLLRA…AEARGLPDAD (82 aa)).

The protein belongs to the RNase D family. A divalent metal cation is required as a cofactor.

Its subcellular location is the cytoplasm. The catalysed reaction is Exonucleolytic cleavage that removes extra residues from the 3'-terminus of tRNA to produce 5'-mononucleotides.. In terms of biological role, exonuclease involved in the 3' processing of various precursor tRNAs. Initiates hydrolysis at the 3'-terminus of an RNA molecule and releases 5'-mononucleotides. This Granulibacter bethesdensis (strain ATCC BAA-1260 / CGDNIH1) protein is Ribonuclease D.